The following is a 109-amino-acid chain: Small ribosomal subunit protein eS25z (109 aa).

The tract at residues 1–36 is disordered; that stretch reads MAPKKDKVPPPSSKPAKSGGGKQKKKKWSKGKQKEK. A compositionally biased stretch (basic residues) spans 22–31; it reads KQKKKKWSKG.

The protein belongs to the eukaryotic ribosomal protein eS25 family.

The protein is Small ribosomal subunit protein eS25z (RPS25A) of Arabidopsis thaliana (Mouse-ear cress).